The sequence spans 781 residues: Dual specificity protein kinase zakA (781 aa).

2 consecutive Protein kinase domains span residues 9–317 (WEEI…HKLI) and 379–654 (DKDD…EIGL). ATP is bound by residues 15–23 (IGEGQYGRV) and K44. D132 serves as the catalytic Proton acceptor. The segment at 168–209 (ETTNNNNNPNNNNNNNNNNNNNNNNNNNNNNNNNNINNINNN) is disordered. Low complexity predominate over residues 171-209 (NNNNNPNNNNNNNNNNNNNNNNNNNNNNNNNNINNINNN). ATP contacts are provided by residues 385–393 (GGAGNFGDV) and K406. The Proton acceptor role is filled by D507.

The protein in the N-terminal section; belongs to the protein kinase superfamily. Ser/Thr protein kinase family. This sequence in the C-terminal section; belongs to the protein kinase superfamily. TKL Tyr protein kinase family. Post-translationally, N-terminal serine/threonine domain is capable of autophosphorylation, in vitro, but to a lower extent than the tyrosine kinase domain. May function as a negative regulator of the tyrosine kinase domain. C-terminal tyrosine kinase domain is capable of autophosphorylation, in vitro. As to expression, zakA and zak2 are coexpressed in prestalk cell population, zakA is enriched in pstB populations and zak1 in pstA populations. ZakA and zak2 are coexpressed in prespore cells, zakA expression levels are 10 fold higher than zak2.

The catalysed reaction is L-seryl-[protein] + ATP = O-phospho-L-seryl-[protein] + ADP + H(+). The enzyme catalyses L-threonyl-[protein] + ATP = O-phospho-L-threonyl-[protein] + ADP + H(+). It catalyses the reaction L-tyrosyl-[protein] + ATP = O-phospho-L-tyrosyl-[protein] + ADP + H(+). Functionally, positive regulator of gsk3/gskA activity required for cell pattern formation and a downstream effector of carC. The kinases, gsk3/gskA, zakA and zak2, form part of a signaling pathway that responds to extracellular cyclic AMP. The pathway has a role in transcriptional regulation; required to direct prespore/spore fates during development. ZakA negatively regulates prestalk differentiation by regulating expression of ecmB. Phosphorylates Y-214 of gsk3/gskA, in vitro. This is Dual specificity protein kinase zakA (zakA) from Dictyostelium discoideum (Social amoeba).